The sequence spans 195 residues: Shikimate kinase (195 aa).

ATP is bound at residue 21 to 26 (GTGKTS). Thr-25 contributes to the Mg(2+) binding site. Residues Asp-43, Arg-67, and Gly-89 each coordinate substrate. The disordered stretch occupies residues 128–148 (REQRPSFSGKASTEISEETMR). Residue Arg-131 coordinates ATP. Residues 132 to 141 (PSFSGKASTE) are compositionally biased toward polar residues. Arg-158 contributes to the substrate binding site.

Belongs to the shikimate kinase family. Monomer. Mg(2+) serves as cofactor.

The protein resides in the cytoplasm. The enzyme catalyses shikimate + ATP = 3-phosphoshikimate + ADP + H(+). It participates in metabolic intermediate biosynthesis; chorismate biosynthesis; chorismate from D-erythrose 4-phosphate and phosphoenolpyruvate: step 5/7. Its function is as follows. Catalyzes the specific phosphorylation of the 3-hydroxyl group of shikimic acid using ATP as a cosubstrate. In Syntrophus aciditrophicus (strain SB), this protein is Shikimate kinase.